We begin with the raw amino-acid sequence, 73 residues long: Translational regulator CsrA (73 aa).

It belongs to the CsrA/RsmA family. In terms of assembly, homodimer; the beta-strands of each monomer intercalate to form a hydrophobic core, while the alpha-helices form wings that extend away from the core.

It localises to the cytoplasm. Its function is as follows. A translational regulator that binds mRNA to regulate translation initiation and/or mRNA stability. Usually binds in the 5'-UTR at or near the Shine-Dalgarno sequence preventing ribosome-binding, thus repressing translation. Its main target seems to be the major flagellin gene, while its function is anatagonized by FliW. In Clostridium kluyveri (strain NBRC 12016), this protein is Translational regulator CsrA.